A 341-amino-acid polypeptide reads, in one-letter code: C2 calcium-dependent domain-containing protein 4D (341 aa).

A compositionally biased stretch (basic and acidic residues) spans 56-71 (RLRDPRGAEGRVDRNP). Disordered regions lie at residues 56–75 (RLRD…GGRN) and 134–176 (CRAP…PYAP). Over residues 139-149 (SDTASSPDSSP) the composition is skewed to low complexity. In terms of domain architecture, C2 spans 205–331 (RGGQLRLSTE…PPLAGGLGPG (127 aa)).

This is C2 calcium-dependent domain-containing protein 4D (C2cd4d) from Mus musculus (Mouse).